We begin with the raw amino-acid sequence, 315 residues long: Protein ORANGE-LIKE, chloroplastic (315 aa).

The transit peptide at 1–16 (MTCFSSATPHRHHLLL) directs the protein to the chloroplast. The next 2 helical transmembrane spans lie at 155 to 175 (LYST…LIAP) and 207 to 227 (IVAS…LIEV). The CR-type zinc finger occupies 225–307 (IEVNNVKQQE…CTGMVTASEH (83 aa)). A CXXCXGXG motif repeat occupies 238 to 245 (CKYCLGTG). The CXXCXXXG motif repeat unit spans residues 249–256 (CARCSASG). One copy of the CXXCXGXG motif repeat lies at 282-289 (CLNCSGAG). Residues 293 to 300 (CPTCLCTG) form a CXXCXXXG motif repeat.

This sequence belongs to the orange-like family. As to quaternary structure, interacts with PSY1.

It localises to the plastid. It is found in the chloroplast membrane. May be associated with accumulation of carotenoids in chromoplasts. The protein is Protein ORANGE-LIKE, chloroplastic (ORLIKE) of Arabidopsis thaliana (Mouse-ear cress).